The chain runs to 346 residues: N-acetyl-gamma-glutamyl-phosphate reductase (346 aa).

Cys150 is an active-site residue.

The protein belongs to the NAGSA dehydrogenase family. Type 1 subfamily.

The protein localises to the cytoplasm. It carries out the reaction N-acetyl-L-glutamate 5-semialdehyde + phosphate + NADP(+) = N-acetyl-L-glutamyl 5-phosphate + NADPH + H(+). It participates in amino-acid biosynthesis; L-arginine biosynthesis; N(2)-acetyl-L-ornithine from L-glutamate: step 3/4. Its function is as follows. Catalyzes the NADPH-dependent reduction of N-acetyl-5-glutamyl phosphate to yield N-acetyl-L-glutamate 5-semialdehyde. The chain is N-acetyl-gamma-glutamyl-phosphate reductase from Brevibacillus brevis (strain 47 / JCM 6285 / NBRC 100599).